The primary structure comprises 520 residues: Bifunctional purine biosynthesis protein PurH (520 aa).

Residues 1-146 enclose the MGS-like domain; the sequence is MAPVALLSVS…KNHADVAVLT (146 aa).

Belongs to the PurH family.

The enzyme catalyses (6R)-10-formyltetrahydrofolate + 5-amino-1-(5-phospho-beta-D-ribosyl)imidazole-4-carboxamide = 5-formamido-1-(5-phospho-D-ribosyl)imidazole-4-carboxamide + (6S)-5,6,7,8-tetrahydrofolate. The catalysed reaction is IMP + H2O = 5-formamido-1-(5-phospho-D-ribosyl)imidazole-4-carboxamide. Its pathway is purine metabolism; IMP biosynthesis via de novo pathway; 5-formamido-1-(5-phospho-D-ribosyl)imidazole-4-carboxamide from 5-amino-1-(5-phospho-D-ribosyl)imidazole-4-carboxamide (10-formyl THF route): step 1/1. It participates in purine metabolism; IMP biosynthesis via de novo pathway; IMP from 5-formamido-1-(5-phospho-D-ribosyl)imidazole-4-carboxamide: step 1/1. This Synechococcus sp. (strain CC9902) protein is Bifunctional purine biosynthesis protein PurH.